We begin with the raw amino-acid sequence, 227 residues long: Cytochrome c oxidase subunit 2 (227 aa).

At 1–14 (MAYPVQLGFQDAAS) the chain is on the mitochondrial intermembrane side. The chain crosses the membrane as a helical span at residues 15 to 45 (PIMEELLYFHDHTLMIVFLISSLVLYIISLM). The Mitochondrial matrix portion of the chain corresponds to 46–59 (LTTKLMHTSTMDAQ). Residues 60-87 (EVETVWTILPAIILILIALPSLRILYMM) traverse the membrane as a helical segment. Residues 88 to 227 (DEITTPSLTL…HFEEWLLSMF (140 aa)) are Mitochondrial intermembrane-facing. The Cu cation site is built by histidine 161, cysteine 196, glutamate 198, cysteine 200, histidine 204, and methionine 207. Glutamate 198 provides a ligand contact to Mg(2+).

The protein belongs to the cytochrome c oxidase subunit 2 family. Component of the cytochrome c oxidase (complex IV, CIV), a multisubunit enzyme composed of 14 subunits. The complex is composed of a catalytic core of 3 subunits MT-CO1, MT-CO2 and MT-CO3, encoded in the mitochondrial DNA, and 11 supernumerary subunits COX4I, COX5A, COX5B, COX6A, COX6B, COX6C, COX7A, COX7B, COX7C, COX8 and NDUFA4, which are encoded in the nuclear genome. The complex exists as a monomer or a dimer and forms supercomplexes (SCs) in the inner mitochondrial membrane with NADH-ubiquinone oxidoreductase (complex I, CI) and ubiquinol-cytochrome c oxidoreductase (cytochrome b-c1 complex, complex III, CIII), resulting in different assemblies (supercomplex SCI(1)III(2)IV(1) and megacomplex MCI(2)III(2)IV(2)). Found in a complex with TMEM177, COA6, COX18, COX20, SCO1 and SCO2. Interacts with TMEM177 in a COX20-dependent manner. Interacts with COX20. Interacts with COX16. Cu cation serves as cofactor.

It localises to the mitochondrion inner membrane. It catalyses the reaction 4 Fe(II)-[cytochrome c] + O2 + 8 H(+)(in) = 4 Fe(III)-[cytochrome c] + 2 H2O + 4 H(+)(out). Component of the cytochrome c oxidase, the last enzyme in the mitochondrial electron transport chain which drives oxidative phosphorylation. The respiratory chain contains 3 multisubunit complexes succinate dehydrogenase (complex II, CII), ubiquinol-cytochrome c oxidoreductase (cytochrome b-c1 complex, complex III, CIII) and cytochrome c oxidase (complex IV, CIV), that cooperate to transfer electrons derived from NADH and succinate to molecular oxygen, creating an electrochemical gradient over the inner membrane that drives transmembrane transport and the ATP synthase. Cytochrome c oxidase is the component of the respiratory chain that catalyzes the reduction of oxygen to water. Electrons originating from reduced cytochrome c in the intermembrane space (IMS) are transferred via the dinuclear copper A center (CU(A)) of subunit 2 and heme A of subunit 1 to the active site in subunit 1, a binuclear center (BNC) formed by heme A3 and copper B (CU(B)). The BNC reduces molecular oxygen to 2 water molecules using 4 electrons from cytochrome c in the IMS and 4 protons from the mitochondrial matrix. This chain is Cytochrome c oxidase subunit 2 (MT-CO2), found in Propithecus tattersalli (Golden-crowned Sifaka).